The primary structure comprises 211 residues: Thiamine-phosphate synthase (211 aa).

Residues 35–39 (QLRDK) and N67 each bind 4-amino-2-methyl-5-(diphosphooxymethyl)pyrimidine. 2 residues coordinate Mg(2+): D68 and D87. S106 lines the 4-amino-2-methyl-5-(diphosphooxymethyl)pyrimidine pocket. 132–134 (TGS) lines the 2-[(2R,5Z)-2-carboxy-4-methylthiazol-5(2H)-ylidene]ethyl phosphate pocket. K135 is a 4-amino-2-methyl-5-(diphosphooxymethyl)pyrimidine binding site. Residues G163 and 183 to 184 (IS) each bind 2-[(2R,5Z)-2-carboxy-4-methylthiazol-5(2H)-ylidene]ethyl phosphate.

Belongs to the thiamine-phosphate synthase family. Mg(2+) is required as a cofactor.

The catalysed reaction is 2-[(2R,5Z)-2-carboxy-4-methylthiazol-5(2H)-ylidene]ethyl phosphate + 4-amino-2-methyl-5-(diphosphooxymethyl)pyrimidine + 2 H(+) = thiamine phosphate + CO2 + diphosphate. It carries out the reaction 2-(2-carboxy-4-methylthiazol-5-yl)ethyl phosphate + 4-amino-2-methyl-5-(diphosphooxymethyl)pyrimidine + 2 H(+) = thiamine phosphate + CO2 + diphosphate. It catalyses the reaction 4-methyl-5-(2-phosphooxyethyl)-thiazole + 4-amino-2-methyl-5-(diphosphooxymethyl)pyrimidine + H(+) = thiamine phosphate + diphosphate. It functions in the pathway cofactor biosynthesis; thiamine diphosphate biosynthesis; thiamine phosphate from 4-amino-2-methyl-5-diphosphomethylpyrimidine and 4-methyl-5-(2-phosphoethyl)-thiazole: step 1/1. In terms of biological role, condenses 4-methyl-5-(beta-hydroxyethyl)thiazole monophosphate (THZ-P) and 2-methyl-4-amino-5-hydroxymethyl pyrimidine pyrophosphate (HMP-PP) to form thiamine monophosphate (TMP). The sequence is that of Thiamine-phosphate synthase from Methanoculleus marisnigri (strain ATCC 35101 / DSM 1498 / JR1).